We begin with the raw amino-acid sequence, 319 residues long: Cobalamin biosynthesis protein CbiB (319 aa).

Helical transmembrane passes span 56–76 (VMWV…LALA), 82–102 (WFGW…RSLA), 153–173 (VDGI…LAMA), 204–224 (VANY…AGLC), and 296–316 (LMWV…CGLS).

It belongs to the CobD/CbiB family.

Its subcellular location is the cell membrane. It functions in the pathway cofactor biosynthesis; adenosylcobalamin biosynthesis. Converts cobyric acid to cobinamide by the addition of aminopropanol on the F carboxylic group. However, the true cosubstrate could be (R)-1-amino-2-propanol O-2-phosphate, leading to cobinamide phosphate. The polypeptide is Cobalamin biosynthesis protein CbiB (Salmonella choleraesuis (strain SC-B67)).